A 313-amino-acid chain; its full sequence is Pantoate--beta-alanine ligase (313 aa).

An ATP-binding site is contributed by 36–43 (MGYLHQGH). His-43 serves as the catalytic Proton donor. Gln-71 serves as a coordination point for (R)-pantoate. Position 71 (Gln-71) interacts with beta-alanine. Position 178 to 181 (178 to 181 (GKKD)) interacts with ATP. Gln-184 serves as a coordination point for (R)-pantoate. An ATP-binding site is contributed by 215 to 218 (MSSR).

This sequence belongs to the pantothenate synthetase family. Homodimer.

Its subcellular location is the cytoplasm. The protein localises to the cytosol. It catalyses the reaction (R)-pantoate + beta-alanine + ATP = (R)-pantothenate + AMP + diphosphate + H(+). It functions in the pathway cofactor biosynthesis; (R)-pantothenate biosynthesis; (R)-pantothenate from (R)-pantoate and beta-alanine: step 1/1. Functionally, catalyzes the condensation of pantoate with beta-alanine to form pantothenate. Essential for panthotenate biosynthesis. In Oryza sativa subsp. japonica (Rice), this protein is Pantoate--beta-alanine ligase (PANC).